A 620-amino-acid chain; its full sequence is Putative ribonuclease H protein At1g65750 (620 aa).

The RNase H type-1 domain maps to 456–586 (CVGWVKVNTD…ADGLANYAFS (131 aa)). Residues Asp465, Glu505, Asp529, and Asp578 each coordinate Mg(2+).

Mg(2+) serves as cofactor.

The catalysed reaction is Endonucleolytic cleavage to 5'-phosphomonoester.. In Arabidopsis thaliana (Mouse-ear cress), this protein is Putative ribonuclease H protein At1g65750.